Here is a 358-residue protein sequence, read N- to C-terminus: NAC domain-containing protein 12 (358 aa).

Positions 16–177 (VPPGFRFHPT…GWVVCRVFRK (162 aa)) constitute an NAC domain. The DNA-binding element occupies 116-183 (IGLRKTLVFY…VFRKKNYQKI (68 aa)).

Stems and roots, specifically in interfascicular fibers (sclerenchyma), cells differentiating into vascular vessels (cambium), and xylem.

The protein localises to the nucleus. In terms of biological role, transcriptional activator of genes involved in biosynthesis of secondary walls. Together with NST1, required for the secondary cell wall thickening and lignification of sclerenchymatous fibers and secondary xylem vessels (tracheary elements). Seems to repress the secondary cell wall thickening of xylary fibers. May also regulate the secondary cell wall lignification of other tissues. Binds to and activates the promoter of MYB46. This is NAC domain-containing protein 12 from Arabidopsis thaliana (Mouse-ear cress).